The primary structure comprises 198 residues: Snake venom metalloproteinase BpirMP (198 aa).

In terms of domain architecture, Peptidase M12B spans 1–197 (TYIEVAVVAD…HNPQCILNEP (197 aa)). Residues E4 and D88 each coordinate Ca(2+). Cystine bridges form between C112-C192, C152-C176, and C154-C159. H137 contacts Zn(2+). The active site involves E138. H141 and H147 together coordinate Zn(2+). C192 and N195 together coordinate Ca(2+).

Belongs to the venom metalloproteinase (M12B) family. P-I subfamily. As to quaternary structure, monomer. It depends on Zn(2+) as a cofactor. As to expression, expressed by the venom gland.

It localises to the secreted. Its activity is regulated as follows. Inhibited by the chelating agents EDTA, EGTA and 1,10-phenanthroline. Is not inhibited by serine proteinase inhibitors aprotinin, leupeptin and benzamidine. Its function is as follows. Zinc metalloprotease that preferentially degrades Aalpha chain of fibrinogen (FGA) (at a dose of 5 ug, whereas at a dose of 10 ug, both FGA and FGB are completely degraded). Degrades fibrin gel in a dose-dependent manner, as well blood clots formed in vitro (thrombolytic activity). Induces hemorrhage (in the dorsal skin of mice), with an MHD of 50 ug. The basal membrane components collagen (all chains of type IV) (COL4A4), fibronectin (FN1), laminin and nidogen are all degraded by this toxin. In Bothrops pirajai (Piraja's lancehead), this protein is Snake venom metalloproteinase BpirMP.